Reading from the N-terminus, the 761-residue chain is Proline-rich extensin-like protein EPR1 (761 aa).

The first 24 residues, 1–24 (MRVPLIDFLRFLVLILSLSGASVA), serve as a signal peptide directing secretion. The stretch at 63-77 (YSPPIYPPPIQKPPT) is one 1; degenerate repeat. A 40 X 17 AA approximate tandem repeats of Y-S-P-P-[IV]-[KY]-P-P-P-x(1,2)-K-P-P-T-P-T region spans residues 63 to 735 (YSPPIYPPPI…PPVQVPPTPT (673 aa)). 39 repeat units span residues 78–94 (YSPP…PTPT), 95–111 (YSPP…PTPT), 112–128 (YSPP…PTPT), 129–145 (YSPP…PTPS), 146–162 (YSPP…PTPT), 163–179 (YSPP…PTPT), 180–195 (YSPP…PTPI), 196–212 (YSPP…PTPI), 213–229 (YSPP…PTPT), 230–246 (YSPP…PTPI), 247–263 (YSPP…PTPI), 264–280 (YSPP…PTPI), 281–297 (YSPP…PTPT), 298–314 (YSPP…PTPT), 315–331 (YSPP…PTPT), 332–347 (YSPP…PTPI), 348–364 (YSPP…PTPI), 365–381 (YSPP…PTPI), 382–398 (YSPP…PTPT), 399–415 (YSPP…PTPT), 416–431 (YSPP…PTPI), 432–448 (YSPP…PTPI), 449–465 (YSPP…PTPT), 466–481 (YSPP…PTPT), 482–498 (YSPP…PTPT), 499–515 (YSPP…PTPT), 516–531 (YSPP…PTPT), 532–548 (YSPP…PTPT), 549–565 (YSPP…PTPT), 566–582 (YSPP…PTPT), 583–599 (YSPP…PTPT), 600–616 (YSPP…PTPT), 617–633 (YSPP…PTPT), 634–650 (YSPP…PTPT), 651–667 (YSPP…PTPT), 668–684 (YSPP…PTPT), 685–701 (YSPP…PTPT), 702–718 (YSPP…PTPT), and 719–735 (YSPP…PTPT). Residues 111-750 (TYSPPIYPPP…QGGYGTPPPY (640 aa)) are compositionally biased toward pro residues. A disordered region spans residues 111–761 (TYSPPIYPPP…YLSHPIDIRN (651 aa)).

The protein belongs to the extensin family. Specifically expressed in endosperm during seed germination, at the site of radicle protrusion.

It localises to the secreted. The protein localises to the primary cell wall. May have a specific role in modifying the cell-wall structure, specifically during seed germination, thus facilitating radicle protrusion. The chain is Proline-rich extensin-like protein EPR1 (EPR1) from Arabidopsis thaliana (Mouse-ear cress).